Here is a 331-residue protein sequence, read N- to C-terminus: Ketol-acid reductoisomerase (NADP(+)) (331 aa).

A KARI N-terminal Rossmann domain is found at 2 to 182; sequence AQLFYDSDAD…GGTRAGILET (181 aa). NADP(+)-binding positions include 25–28, Ser-51, Ser-53, and 83–86; these read YGSQ and DEFQ. Residue His-108 is part of the active site. Residue Gly-134 participates in NADP(+) binding. The KARI C-terminal knotted domain maps to 183–328; the sequence is NFKEETETDL…KGLRSMFSWL (146 aa). Positions 191, 195, 227, and 231 each coordinate Mg(2+). Position 252 (Ser-252) interacts with substrate.

The protein belongs to the ketol-acid reductoisomerase family. It depends on Mg(2+) as a cofactor.

It carries out the reaction (2R)-2,3-dihydroxy-3-methylbutanoate + NADP(+) = (2S)-2-acetolactate + NADPH + H(+). The catalysed reaction is (2R,3R)-2,3-dihydroxy-3-methylpentanoate + NADP(+) = (S)-2-ethyl-2-hydroxy-3-oxobutanoate + NADPH + H(+). The protein operates within amino-acid biosynthesis; L-isoleucine biosynthesis; L-isoleucine from 2-oxobutanoate: step 2/4. Its pathway is amino-acid biosynthesis; L-valine biosynthesis; L-valine from pyruvate: step 2/4. In terms of biological role, involved in the biosynthesis of branched-chain amino acids (BCAA). Catalyzes an alkyl-migration followed by a ketol-acid reduction of (S)-2-acetolactate (S2AL) to yield (R)-2,3-dihydroxy-isovalerate. In the isomerase reaction, S2AL is rearranged via a Mg-dependent methyl migration to produce 3-hydroxy-3-methyl-2-ketobutyrate (HMKB). In the reductase reaction, this 2-ketoacid undergoes a metal-dependent reduction by NADPH to yield (R)-2,3-dihydroxy-isovalerate. The sequence is that of Ketol-acid reductoisomerase (NADP(+)) from Synechococcus sp. (strain CC9605).